Reading from the N-terminus, the 358-residue chain is UDP-N-acetylglucosamine--N-acetylmuramyl-(pentapeptide) pyrophosphoryl-undecaprenol N-acetylglucosamine transferase (358 aa).

UDP-N-acetyl-alpha-D-glucosamine contacts are provided by residues 10–12 (TGG), Asn-124, Arg-165, Ser-191, Ile-246, and Gln-291.

The protein belongs to the glycosyltransferase 28 family. MurG subfamily.

The protein resides in the cell inner membrane. The catalysed reaction is di-trans,octa-cis-undecaprenyl diphospho-N-acetyl-alpha-D-muramoyl-L-alanyl-D-glutamyl-meso-2,6-diaminopimeloyl-D-alanyl-D-alanine + UDP-N-acetyl-alpha-D-glucosamine = di-trans,octa-cis-undecaprenyl diphospho-[N-acetyl-alpha-D-glucosaminyl-(1-&gt;4)]-N-acetyl-alpha-D-muramoyl-L-alanyl-D-glutamyl-meso-2,6-diaminopimeloyl-D-alanyl-D-alanine + UDP + H(+). The protein operates within cell wall biogenesis; peptidoglycan biosynthesis. Its function is as follows. Cell wall formation. Catalyzes the transfer of a GlcNAc subunit on undecaprenyl-pyrophosphoryl-MurNAc-pentapeptide (lipid intermediate I) to form undecaprenyl-pyrophosphoryl-MurNAc-(pentapeptide)GlcNAc (lipid intermediate II). The sequence is that of UDP-N-acetylglucosamine--N-acetylmuramyl-(pentapeptide) pyrophosphoryl-undecaprenol N-acetylglucosamine transferase from Citrifermentans bemidjiense (strain ATCC BAA-1014 / DSM 16622 / JCM 12645 / Bem) (Geobacter bemidjiensis).